The following is a 233-amino-acid chain: Probable dihydroorotate dehydrogenase B (NAD(+)), electron transfer subunit (233 aa).

Residues 1–87 (MYRVVTIEEV…RGPYGHGFIK (87 aa)) enclose the FAD-binding FR-type domain. Positions 202, 207, 210, and 218 each coordinate [2Fe-2S] cluster.

This sequence belongs to the PyrK family. Heterotetramer of 2 PyrK and 2 PyrD type B subunits. [2Fe-2S] cluster is required as a cofactor. The cofactor is FAD.

Its pathway is pyrimidine metabolism; UMP biosynthesis via de novo pathway; orotate from (S)-dihydroorotate (NAD(+) route): step 1/1. In terms of biological role, responsible for channeling the electrons from the oxidation of dihydroorotate from the FMN redox center in the PyrD type B subunit to the ultimate electron acceptor NAD(+). The protein is Probable dihydroorotate dehydrogenase B (NAD(+)), electron transfer subunit of Thermococcus kodakarensis (strain ATCC BAA-918 / JCM 12380 / KOD1) (Pyrococcus kodakaraensis (strain KOD1)).